The primary structure comprises 598 residues: Vanadium-dependent bromoperoxidase (598 aa).

Residues Phe361, Gln363, Asp365, Asp368, and Gln370 each coordinate Ca(2+). Lys400 and Arg408 together coordinate vanadate. His480 is an active-site residue. Vanadate contacts are provided by Ser485, Gly486, His487, Arg547, and His553. Residue His487 is part of the active site.

This sequence belongs to the vanadium-dependent haloperoxidase family. In terms of assembly, homododecamer. It depends on Ca(2+) as a cofactor. Vanadate serves as cofactor.

It carries out the reaction RH + Br(-) + H2O2 = RBr + 2 H2O.. Functionally, catalyzes the halogenation of organic substrates in the presence of hydrogen peroxide. This is Vanadium-dependent bromoperoxidase from Corallina officinalis (Coral seaweed).